The following is a 224-amino-acid chain: Orotate phosphoribosyltransferase (224 aa).

5-phospho-alpha-D-ribose 1-diphosphate-binding positions include lysine 26, 73–74, arginine 100, lysine 101, lysine 104, histidine 106, and 127–135; these read YK and EDVTTAGTS. Residues threonine 131 and arginine 160 each coordinate orotate.

It belongs to the purine/pyrimidine phosphoribosyltransferase family. PyrE subfamily. In terms of assembly, homodimer. Mg(2+) serves as cofactor.

The enzyme catalyses orotidine 5'-phosphate + diphosphate = orotate + 5-phospho-alpha-D-ribose 1-diphosphate. It participates in pyrimidine metabolism; UMP biosynthesis via de novo pathway; UMP from orotate: step 1/2. Catalyzes the transfer of a ribosyl phosphate group from 5-phosphoribose 1-diphosphate to orotate, leading to the formation of orotidine monophosphate (OMP). The sequence is that of Orotate phosphoribosyltransferase from Clostridium beijerinckii (strain ATCC 51743 / NCIMB 8052) (Clostridium acetobutylicum).